The primary structure comprises 114 residues: Photosystem II reaction center Psb28 protein (114 aa).

This sequence belongs to the Psb28 family. Part of the photosystem II complex.

The protein localises to the plastid. It localises to the chloroplast thylakoid membrane. This chain is Photosystem II reaction center Psb28 protein, found in Gracilaria tenuistipitata var. liui (Red alga).